The chain runs to 747 residues: Superkiller protein 7 (747 aa).

Residues 14–51 are disordered; it reads KSKGLLSADQSHSTSKSASLLERLHKNRETKDNNAETK. Polar residues predominate over residues 21-31; the sequence is ADQSHSTSKSA. Residues 35-51 show a composition bias toward basic and acidic residues; sequence ERLHKNRETKDNNAETK. A phosphoserine mark is found at Ser88 and Ser90. Residues 89–117 are disordered; the sequence is NSDLEKQGKSVTLDSKENELPTKRKSPDD. The 239-residue stretch at 265–503 folds into the tr-type G domain; that stretch reads PLNLTCLFLG…YVPEWYEGPT (239 aa). The segment at 274-281 is G1; it reads GDTNAGKS. A GTP-binding site is contributed by 274–281; it reads GDTNAGKS. A G2 region spans residues 331–335; sequence GFSMF. The interval 356–359 is G3; the sequence is DTPG. Residues 356–360 and 427–430 each bind GTP; these read DTPGS and NKAD. A G4 region spans residues 427 to 430; the sequence is NKAD. Residues 467 to 469 form a G5 region; the sequence is SGL.

It belongs to the TRAFAC class translation factor GTPase superfamily. Classic translation factor GTPase family. Interacts with the exosome and with the SKI complex composed of at least SKI2, SKI3 and SKI8. Interacts directly with SKI3 and SKI8.

The protein localises to the cytoplasm. Its function is as follows. Represses the expression of non-poly(A) mRNAs like L-A or M viruses and is therefore involved in antiviral system. Mediates interactions via its N-terminus between the exosome and the SKI complex which operate in the 3'-to-5' mRNA-decay pathway. By interacting with NAM7, is also required for nonsense-mediated 3'-to-5' mRNA-decay (NMD). May recognize a stalled 80S ribosome at the 3'-end of a nonstop mRNA which leads to the recruitment of the exosome and SKI complexes to the mRNAs to be degraded. In Saccharomyces cerevisiae (strain ATCC 204508 / S288c) (Baker's yeast), this protein is Superkiller protein 7 (SKI7).